The sequence spans 191 residues: Probable GTP-binding protein EngB (191 aa).

The 169-residue stretch at 22 to 190 (RLPEIAFLGR…WQAITTTLQA (169 aa)) folds into the EngB-type G domain. Residues 30–37 (GRSNVGKS), 57–61 (GRTQT), 75–78 (DLPG), 142–145 (TKTD), and 169–171 (FSA) each bind GTP. Mg(2+)-binding residues include Ser37 and Thr59.

Belongs to the TRAFAC class TrmE-Era-EngA-EngB-Septin-like GTPase superfamily. EngB GTPase family. It depends on Mg(2+) as a cofactor.

Necessary for normal cell division and for the maintenance of normal septation. The polypeptide is Probable GTP-binding protein EngB (Solibacter usitatus (strain Ellin6076)).